Reading from the N-terminus, the 324-residue chain is MFARYTFRCSQPLAQSVRKYSSEAPAKSSRIPLIGGITLAAGAGYYYYWQTTSAKSEPKERSTVFKGGDQGWIGLKLAHIDNVNHNVKKLRFEFEDPESVSGLHIASALLTKYKGLTDEKPTIRPYTPVSDEGMWASLGYLDLLVKRYPNGPMSNHLHNMAVGQRLDFKGPLPKYPWEPSKHDHICLIAGGTGITPMYQLVRKIFSNPEDKTKVTLVFANVTEEDILLRKEFEHLENTYPRRFRAFYTLDKPPKNWAQGTGFITKDLLKTVLPEPKTENIKIFVCGPPAMYKAISGQKVSPKDQGELSGILKELGYSKEQVYKF.

Residues 31 to 47 (IPLIGGITLAAGAGYYY) traverse the membrane as a helical segment. The region spanning 70–178 (QGWIGLKLAH…KGPLPKYPWE (109 aa)) is the FAD-binding FR-type domain. 181–216 (KHDHICLIAGGTGITPMYQLVRKIFSNPEDKTKVTL) contacts FAD.

Belongs to the flavoprotein pyridine nucleotide cytochrome reductase family. FAD serves as cofactor.

The protein resides in the mitochondrion outer membrane. The enzyme catalyses 2 Fe(III)-[cytochrome b5] + NADH = 2 Fe(II)-[cytochrome b5] + NAD(+) + H(+). In terms of biological role, may mediate the reduction of outer membrane cytochrome b5. The chain is NADH-cytochrome b5 reductase 2 (MCR1) from Ajellomyces capsulatus (strain NAm1 / WU24) (Darling's disease fungus).